The chain runs to 175 residues: ATP synthase subunit b 2 (175 aa).

The chain crosses the membrane as a helical span at residues 20-40; the sequence is LIFWTAVTFVIVLLILKKFAW.

It belongs to the ATPase B chain family. F-type ATPases have 2 components, F(1) - the catalytic core - and F(0) - the membrane proton channel. F(1) has five subunits: alpha(3), beta(3), gamma(1), delta(1), epsilon(1). F(0) has four main subunits: a(1), b(2) and c(10-14). The alpha and beta chains form an alternating ring which encloses part of the gamma chain. F(1) is attached to F(0) by a central stalk formed by the gamma and epsilon chains, while a peripheral stalk is formed by the delta and b chains.

It is found in the cell inner membrane. F(1)F(0) ATP synthase produces ATP from ADP in the presence of a proton or sodium gradient. F-type ATPases consist of two structural domains, F(1) containing the extramembraneous catalytic core and F(0) containing the membrane proton channel, linked together by a central stalk and a peripheral stalk. During catalysis, ATP synthesis in the catalytic domain of F(1) is coupled via a rotary mechanism of the central stalk subunits to proton translocation. In terms of biological role, component of the F(0) channel, it forms part of the peripheral stalk, linking F(1) to F(0). This Prosthecochloris aestuarii (strain DSM 271 / SK 413) protein is ATP synthase subunit b 2.